Here is a 292-residue protein sequence, read N- to C-terminus: Protein LRATD1 (292 aa).

Ser-38 carries the post-translational modification Phosphoserine. One can recognise an LRAT domain in the interval 133–228; sequence PAPEPPAPAP…CRFGKREFKA (96 aa).

Belongs to the LRATD family. In terms of tissue distribution, only detected in testis. Highly expressed in colon cancer cells.

It is found in the cytoplasm. In terms of biological role, may play a role in cell morphology and motility. The sequence is that of Protein LRATD1 from Homo sapiens (Human).